The following is a 319-amino-acid chain: Taste receptor type 2 member 39 (319 aa).

Topologically, residues 1 to 16 are extracellular; that stretch reads MAQPSNYWKQDLLPLS. Residues 17-37 form a helical membrane-spanning segment; it reads ILILTLVATECTIGIIASGII. Residues 38–56 lie on the Cytoplasmic side of the membrane; the sequence is TVVNAVSWVQKRAVSITTR. Residues 57-77 traverse the membrane as a helical segment; it reads ILLLLSVSRIGLQSIILIEMT. The Extracellular portion of the chain corresponds to 78 to 97; that stretch reads SSIFNFSSYNSVLYRVSRVS. Asparagine 82 carries N-linked (GlcNAc...) asparagine glycosylation. A helical transmembrane segment spans residues 98–118; sequence FVFLNYCSLWFAALLSFFHFV. Residues 119 to 137 are Cytoplasmic-facing; the sequence is KIANFSYPLFFKLKWRISE. The chain crosses the membrane as a helical span at residues 138–158; the sequence is LMPWLLWLSVFISFSSSMFFC. Residues 159 to 187 lie on the Extracellular side of the membrane; sequence NHKYTVYNNISLSSNICNFTMELYVAEAN. 2 N-linked (GlcNAc...) asparagine glycosylation sites follow: asparagine 167 and asparagine 176. A helical membrane pass occupies residues 188–208; the sequence is VVNVAFLFSFGILPPLTMFIA. Topologically, residues 209-247 are cytoplasmic; it reads TATLLIFSLRRHTLHMRNGDADSRNPRVEAHKQAIKETS. The chain crosses the membrane as a helical span at residues 248–268; that stretch reads CFLFLYILYAAVLFLSTSNIA. Residues 269-273 are Extracellular-facing; that stretch reads DASLF. The helical transmembrane segment at 274–294 threads the bilayer; it reads WSSVLRISLPVYPAGHSVLLI. Residues 295–319 lie on the Cytoplasmic side of the membrane; sequence QSNPGLKRTWKQLLSQIHLHLQSRY.

This sequence belongs to the G-protein coupled receptor T2R family.

It localises to the membrane. Functionally, putative taste receptor which may play a role in the perception of bitterness. The polypeptide is Taste receptor type 2 member 39 (Rattus norvegicus (Rat)).